The sequence spans 219 residues: Large ribosomal subunit protein bL25 (219 aa).

The interval 188 to 219 (TVAAPADTAVQPESSSTKGKKDEDGALAKDKK) is disordered. Residues 206 to 219 (GKKDEDGALAKDKK) show a composition bias toward basic and acidic residues.

It belongs to the bacterial ribosomal protein bL25 family. CTC subfamily. Part of the 50S ribosomal subunit; part of the 5S rRNA/L5/L18/L25 subcomplex. Contacts the 5S rRNA. Binds to the 5S rRNA independently of L5 and L18.

In terms of biological role, this is one of the proteins that binds to the 5S RNA in the ribosome where it forms part of the central protuberance. The protein is Large ribosomal subunit protein bL25 of Elusimicrobium minutum (strain Pei191).